A 203-amino-acid chain; its full sequence is Holliday junction branch migration complex subunit RuvA (203 aa).

The interval Met1–Asn64 is domain I. The interval Asn65–Pro142 is domain II. Positions Ala143–Pro154 are flexible linker. The tract at residues Ala155–Leu203 is domain III.

This sequence belongs to the RuvA family. As to quaternary structure, homotetramer. Forms an RuvA(8)-RuvB(12)-Holliday junction (HJ) complex. HJ DNA is sandwiched between 2 RuvA tetramers; dsDNA enters through RuvA and exits via RuvB. An RuvB hexamer assembles on each DNA strand where it exits the tetramer. Each RuvB hexamer is contacted by two RuvA subunits (via domain III) on 2 adjacent RuvB subunits; this complex drives branch migration. In the full resolvosome a probable DNA-RuvA(4)-RuvB(12)-RuvC(2) complex forms which resolves the HJ.

It localises to the cytoplasm. Its function is as follows. The RuvA-RuvB-RuvC complex processes Holliday junction (HJ) DNA during genetic recombination and DNA repair, while the RuvA-RuvB complex plays an important role in the rescue of blocked DNA replication forks via replication fork reversal (RFR). RuvA specifically binds to HJ cruciform DNA, conferring on it an open structure. The RuvB hexamer acts as an ATP-dependent pump, pulling dsDNA into and through the RuvAB complex. HJ branch migration allows RuvC to scan DNA until it finds its consensus sequence, where it cleaves and resolves the cruciform DNA. The chain is Holliday junction branch migration complex subunit RuvA from Escherichia coli O9:H4 (strain HS).